We begin with the raw amino-acid sequence, 1291 residues long: Ethylene-insensitive protein 2.2 (1291 aa).

Helical transmembrane passes span A18–W38, F48–Y68, F96–I116, L128–L148, S155–I175, and S195–H215. The N-linked (GlcNAc...) asparagine glycan is linked to N227. Helical transmembrane passes span G231–V251, Y253–F273, V288–W308, I335–Q355, L356–F376, F393–V413, and V441–L461. A disordered region spans residues T498–S518. N550 is a glycosylation site (N-linked (GlcNAc...) asparagine). Residues A614–A662 form a disordered region. Residues E617–E627 are compositionally biased toward acidic residues. Positions G635–G653 are enriched in polar residues. Phosphoserine is present on residues S647 and S664. Disordered stretches follow at residues Q742–R768 and G787–S808. Positions N759–R768 are enriched in polar residues. T818 carries the post-translational modification Phosphothreonine. The disordered stretch occupies residues G836 to P856. N891 carries an N-linked (GlcNAc...) asparagine glycan. Position 923 is a phosphoserine (S923). The N-linked (GlcNAc...) asparagine glycan is linked to N1027. The disordered stretch occupies residues H1210–R1229. Positions D1262–K1269 match the Nuclear localization signal motif.

It belongs to the NRAMP (TC 2.A.55) family.

The protein resides in the endoplasmic reticulum membrane. The protein localises to the nucleus. It localises to the cytoplasm. Its function is as follows. Central factor in signaling pathways regulated by ethylene (ET) and involved in various processes including development, plant defense, senescence, nucleotide sugar flux, and tropisms. Trafficking signal inducing ethylene response. The nuclear localization is both necessary and sufficient to activate EIN3-mediated transcription and ethylene responses. The chain is Ethylene-insensitive protein 2.2 from Populus trichocarpa (Western balsam poplar).